Reading from the N-terminus, the 265-residue chain is ATP synthase subunit a (265 aa).

A run of 6 helical transmembrane segments spans residues 26-46 (VHLD…FFFY), 88-108 (IGSL…IDLI), 132-152 (DISA…FYTI), 168-188 (PFNH…TLLA), 195-217 (FRLF…MYMA), and 231-251 (LIWA…FMML).

This sequence belongs to the ATPase A chain family. As to quaternary structure, F-type ATPases have 2 components, CF(1) - the catalytic core - and CF(0) - the membrane proton channel. CF(1) has five subunits: alpha(3), beta(3), gamma(1), delta(1), epsilon(1). CF(0) has three main subunits: a(1), b(2) and c(9-12). The alpha and beta chains form an alternating ring which encloses part of the gamma chain. CF(1) is attached to CF(0) by a central stalk formed by the gamma and epsilon chains, while a peripheral stalk is formed by the delta and b chains.

The protein resides in the cell inner membrane. Its function is as follows. Key component of the proton channel; it plays a direct role in the translocation of protons across the membrane. The polypeptide is ATP synthase subunit a (Histophilus somni (strain 2336) (Haemophilus somnus)).